Reading from the N-terminus, the 448-residue chain is Protein EVI2B (448 aa).

An N-terminal signal peptide occupies residues 1 to 21 (MDPKYFILILFCGHLNNTFFS). N-linked (GlcNAc...) asparagine glycosylation is found at asparagine 16 and asparagine 50. At 22 to 202 (KTETITTEKQ…QTPQKNNYNS (181 aa)) the chain is on the extracellular side. Residues 74–108 (AKVTAGQPTPAVYTSSEKPEAHTSAGQPLAYNTKQ) form a disordered region. Polar residues predominate over residues 97 to 108 (SAGQPLAYNTKQ). A glycan (N-linked (GlcNAc...) asparagine) is linked at asparagine 114. A helical membrane pass occupies residues 203 to 226 (IAAILIGVLLTSMLVAIIIIVLWK). Residues 227 to 448 (CLRKPVLNDQ…SLPPPPAELL (222 aa)) are Cytoplasmic-facing. A Phosphothreonine modification is found at threonine 249. Phosphoserine is present on residues serine 268, serine 271, serine 278, and serine 294. 2 disordered regions span residues 298–372 (IEDS…DSTS) and 427–448 (SIPP…AELL). Polar residues-rich tracts occupy residues 313–333 (VNGT…VSSS) and 350–372 (QESN…DSTS).

In terms of tissue distribution, bone marrow, peripheral blood mononuclear cells, fibroblasts and Epstein-Barr virus-transformed lymphoblastoid cell lines. Strongly expressed in granulocytic cells, and weakly on lymphocytes cells.

The protein resides in the membrane. Functionally, required for granulocyte differentiation and functionality of hematopoietic progenitor cells through the control of cell cycle progression and survival of hematopoietic progenitor cells. This Homo sapiens (Human) protein is Protein EVI2B.